The following is a 121-amino-acid chain: Holo-[acyl-carrier-protein] synthase (121 aa).

Mg(2+) contacts are provided by D5 and E50.

This sequence belongs to the P-Pant transferase superfamily. AcpS family. Mg(2+) serves as cofactor.

It is found in the cytoplasm. The enzyme catalyses apo-[ACP] + CoA = holo-[ACP] + adenosine 3',5'-bisphosphate + H(+). In terms of biological role, transfers the 4'-phosphopantetheine moiety from coenzyme A to a Ser of acyl-carrier-protein. This Sulfurimonas denitrificans (strain ATCC 33889 / DSM 1251) (Thiomicrospira denitrificans (strain ATCC 33889 / DSM 1251)) protein is Holo-[acyl-carrier-protein] synthase.